The primary structure comprises 80 residues: HssA/B-like protein 2 (80 aa).

The disordered stretch occupies residues 1–29; that stretch reads MSLLSALTSISKPMNTSSKSSVSSKNVSG. Low complexity predominate over residues 9–29; the sequence is SISKPMNTSSKSSVSSKNVSG.

Belongs to the hssA/B family.

This is HssA/B-like protein 2 (hssl2) from Dictyostelium discoideum (Social amoeba).